A 186-amino-acid polypeptide reads, in one-letter code: Superoxide dismutase [Cu-Zn] (186 aa).

Positions 1-20 (MKKTVLALMFSCGMVASAFA) are cleaved as a signal peptide. 3 residues coordinate Cu cation: His79, His81, and His104. An intrachain disulfide couples Cys86 to Cys182. Positions 104, 113, 122, and 125 each coordinate Zn(2+). Position 160 (His160) interacts with Cu cation.

It belongs to the Cu-Zn superoxide dismutase family. As to quaternary structure, homodimer. The cofactor is Cu cation. It depends on Zn(2+) as a cofactor.

It localises to the periplasm. It catalyses the reaction 2 superoxide + 2 H(+) = H2O2 + O2. In terms of biological role, destroys radicals which are normally produced within the cells and which are toxic to biological systems. The chain is Superoxide dismutase [Cu-Zn] (sodC) from Pasteurella multocida (strain Pm70).